Here is a 208-residue protein sequence, read N- to C-terminus: Protein Nef (208 aa).

Gly2 carries N-myristoyl glycine; by host lipidation. Phosphoserine; by host is present on Ser6. An acidic; interacts with host PACS1 and PACS2; stabilizes the interaction of NEF/MHC-I with host AP1M1; necessary for MHC-I internalization region spans residues 64–67 (EEEE). Positions 71–80 (PVKPQVPLRP) are SH3-binding; interaction with Src family tyrosine kinases. Positions 74–77 (PQVP) match the PxxP; stabilizes the interaction of NEF/MHC-I with host AP1M1; necessary for MHC-I internalization motif. A mediates dimerization, Nef-PTE1 interaction region spans residues 110–126 (DILDLWVYHTQGYFPDW). Residues 150 to 182 (VEPEKIEEANKGENNCLLHPMSQHGMDDPEREV) form a binding to ATP6V1H region. A Dileucine internalization motif; necessary for CD4 internalization motif is present at residues 166-167 (LL). A Diacidic; necessary for CD4 internalization motif is present at residues 176-177 (DD).

Belongs to the lentivirus primate group Nef protein family. As to quaternary structure, monomer; cytosolic form. Homodimer; membrane bound form. Interacts with Nef associated p21-activated kinase (PAK2); this interaction activates PAK2. Associates with the Nef-MHC-I-AP1 complex; this complex is required for MHC-I internalization. Interacts (via C-terminus) with host PI3-kinase. Interacts with host PACS1; this interaction seems to be weak. Interacts with host PACS2. Interacts with host LCK and MAPK3; these interactions inhibit the kinase activity of the latter. Interacts with host ATP6V1H; this interaction may play a role in CD4 endocytosis. Associates with the CD4-Nef-AP2 complex; this complex is required for CD4 internalization. Interacts with host AP2 subunit alpha and AP2 subunit sigma2. Interacts with TCR-zeta chain; this interaction up-regulates the Fas ligand (FasL) surface expression. Interacts with host HCK, LYN, and SRC; these interactions activate the Src family kinases. Interacts with MAP3K5; this interaction inhibits the Fas and TNFR-mediated death signals. Interacts with beta-COP and PTE1. Interacts with human RACK1; this increases Nef phosphorylation by PKC. Interacts with TP53; this interaction decreases the half-life of TP53, protecting the infected cell against p53-mediated apoptosis. The virion-associated Nef proteins are cleaved by the viral protease to release the soluble C-terminal core protein. Nef is probably cleaved concomitantly with viral structural proteins on maturation of virus particles. Post-translationally, myristoylated. In terms of processing, phosphorylated on serine residues, probably by host PKCdelta and theta.

The protein localises to the host cell membrane. It localises to the virion. Its subcellular location is the secreted. The protein resides in the host Golgi apparatus membrane. Functionally, factor of infectivity and pathogenicity, required for optimal virus replication. Alters numerous pathways of T-lymphocyte function and down-regulates immunity surface molecules in order to evade host defense and increase viral infectivity. Alters the functionality of other immunity cells, like dendritic cells, monocytes/macrophages and NK cells. In terms of biological role, in infected CD4(+) T-lymphocytes, down-regulates the surface MHC-I, mature MHC-II, CD4, CD28, CCR5 and CXCR4 molecules. Mediates internalization and degradation of host CD4 through the interaction of with the cytoplasmic tail of CD4, the recruitment of AP-2 (clathrin adapter protein complex 2), internalization through clathrin coated pits, and subsequent transport to endosomes and lysosomes for degradation. Diverts host MHC-I molecules to the trans-Golgi network-associated endosomal compartments by an endocytic pathway to finally target them for degradation. MHC-I down-regulation may involve AP-1 (clathrin adapter protein complex 1) or possibly Src family kinase-ZAP70/Syk-PI3K cascade recruited by PACS2. In consequence infected cells are masked for immune recognition by cytotoxic T-lymphocytes. Decreasing the number of immune receptors also prevents reinfection by more HIV particles (superinfection). Down-regulates host SERINC3 and SERINC5 thereby excluding these proteins from the viral particles. Virion infectivity is drastically higher when SERINC3 or SERINC5 are excluded from the viral envelope, because these host antiviral proteins impair the membrane fusion event necessary for subsequent virion penetration. Its function is as follows. Bypasses host T-cell signaling by inducing a transcriptional program nearly identical to that of anti-CD3 cell activation. Interaction with TCR-zeta chain up-regulates the Fas ligand (FasL). Increasing surface FasL molecules and decreasing surface MHC-I molecules on infected CD4(+) cells send attacking cytotoxic CD8+ T-lymphocytes into apoptosis. Plays a role in optimizing the host cell environment for viral replication without causing cell death by apoptosis. Protects the infected cells from apoptosis in order to keep them alive until the next virus generation is ready to strike. Inhibits the Fas and TNFR-mediated death signals by blocking MAP3K5/ASK1. Decreases the half-life of TP53, protecting the infected cell against p53-mediated apoptosis. Inhibits the apoptotic signals regulated by the Bcl-2 family proteins through the formation of a Nef/PI3-kinase/PAK2 complex that leads to activation of PAK2 and induces phosphorylation of host BAD. Functionally, extracellular Nef protein targets CD4(+) T-lymphocytes for apoptosis by interacting with CXCR4 surface receptors. In Human immunodeficiency virus type 1 group M subtype B (isolate MN) (HIV-1), this protein is Protein Nef.